The chain runs to 66 residues: Ocellatin-PT1 (66 aa).

Residues methionine 1 to cysteine 22 form the signal peptide. Residues aspartate 23–glutamate 39 constitute a propeptide that is removed on maturation. A Valine amide modification is found at valine 66.

As to expression, expressed by the skin glands.

Its subcellular location is the secreted. Has antibacterial activity against Gram-negative bacterium E.coli ATCC 25922 (MIC=300 uM) but not against S.pneumoniae ATCC 700603, S.choleraesuis ATCC 14028 or Gram-positive bacterium S.aureus ATCC 29313. Shows virtually no hemolytic activity and no cytotoxicity. In Leptodactylus pustulatus (Ceara white-lipped frog), this protein is Ocellatin-PT1.